We begin with the raw amino-acid sequence, 481 residues long: PTS system N-acetylmuramic acid-specific EIIBC component (481 aa).

Residues 1-89 (MAKITQTMMA…NALIESGDNV (89 aa)) enclose the PTS EIIB type-1 domain. The active-site Phosphocysteine intermediate; for EIIB activity is the Cys28. One can recognise a PTS EIIC type-1 domain in the interval 122–481 (SKFATIFTPL…FFGCKDVDLS (360 aa)). 10 consecutive transmembrane segments (helical) span residues 124 to 144 (FATI…LLGI), 165 to 185 (LVAY…ILIG), 190 to 210 (QAFG…VLGY), 225 to 245 (FFGF…AAIL), 263 to 283 (MILT…LIIM), 307 to 327 (AAIL…QGFV), 342 to 362 (LFPI…ALYA), 376 to 396 (GAII…VTLP), 406 to 426 (IGGA…LPVG), and 448 to 468 (IFAG…VGFA).

It localises to the cell inner membrane. The catalysed reaction is N-acetyl-beta-D-muramate(out) + N(pros)-phospho-L-histidyl-[protein] = N-acetyl-beta-D-muramate 6-phosphate(in) + L-histidyl-[protein]. Functionally, the phosphoenolpyruvate-dependent sugar phosphotransferase system (sugar PTS), a major carbohydrate active transport system, catalyzes the phosphorylation of incoming sugar substrates concomitantly with their translocation across the cell membrane. This system is involved in N-acetylmuramic acid (MurNAc) transport, yielding cytoplasmic MurNAc-6-P. Is also able to take up anhydro-N-acetylmuramic acid (anhMurNAc), but cannot phosphorylate the carbon 6, probably because of the 1,6-anhydro ring. This Vibrio cholerae serotype O1 (strain ATCC 39315 / El Tor Inaba N16961) protein is PTS system N-acetylmuramic acid-specific EIIBC component (murP).